The following is a 540-amino-acid chain: T-complex protein 1 subunit alpha (540 aa).

It belongs to the TCP-1 chaperonin family. In terms of assembly, component of the T-complex protein 1 (TCP1) complex.

The protein localises to the cytoplasm. In terms of biological role, molecular chaperone; assists the folding of proteins upon ATP hydrolysis. This chain is T-complex protein 1 subunit alpha (TCP1), found in Encephalitozoon cuniculi (strain GB-M1) (Microsporidian parasite).